A 343-amino-acid polypeptide reads, in one-letter code: Glycerol-3-phosphate dehydrogenase [NAD(P)+] (343 aa).

4 residues coordinate NADPH: S15, F16, R36, and K110. The sn-glycerol 3-phosphate site is built by K110 and G138. A142 is a binding site for NADPH. 5 residues coordinate sn-glycerol 3-phosphate: K193, D246, S256, R257, and N258. K193 serves as the catalytic Proton acceptor. R257 lines the NADPH pocket. E283 provides a ligand contact to NADPH.

This sequence belongs to the NAD-dependent glycerol-3-phosphate dehydrogenase family.

It localises to the cytoplasm. It carries out the reaction sn-glycerol 3-phosphate + NAD(+) = dihydroxyacetone phosphate + NADH + H(+). The catalysed reaction is sn-glycerol 3-phosphate + NADP(+) = dihydroxyacetone phosphate + NADPH + H(+). Its pathway is membrane lipid metabolism; glycerophospholipid metabolism. In terms of biological role, catalyzes the reduction of the glycolytic intermediate dihydroxyacetone phosphate (DHAP) to sn-glycerol 3-phosphate (G3P), the key precursor for phospholipid synthesis. The chain is Glycerol-3-phosphate dehydrogenase [NAD(P)+] from Alcanivorax borkumensis (strain ATCC 700651 / DSM 11573 / NCIMB 13689 / SK2).